The sequence spans 491 residues: Probable glycine dehydrogenase (decarboxylating) subunit 2 (491 aa).

Lys264 is modified (N6-(pyridoxal phosphate)lysine).

It belongs to the GcvP family. C-terminal subunit subfamily. In terms of assembly, the glycine cleavage system is composed of four proteins: P, T, L and H. In this organism, the P 'protein' is a heterodimer of two subunits. It depends on pyridoxal 5'-phosphate as a cofactor.

It carries out the reaction N(6)-[(R)-lipoyl]-L-lysyl-[glycine-cleavage complex H protein] + glycine + H(+) = N(6)-[(R)-S(8)-aminomethyldihydrolipoyl]-L-lysyl-[glycine-cleavage complex H protein] + CO2. Functionally, the glycine cleavage system catalyzes the degradation of glycine. The P protein binds the alpha-amino group of glycine through its pyridoxal phosphate cofactor; CO(2) is released and the remaining methylamine moiety is then transferred to the lipoamide cofactor of the H protein. The polypeptide is Probable glycine dehydrogenase (decarboxylating) subunit 2 (Coxiella burnetii (strain CbuG_Q212) (Coxiella burnetii (strain Q212))).